The following is a 107-amino-acid chain: Sulfurtransferase Alvin_2599 (107 aa).

The 89-residue stretch at 16-104 (DTEDVLLVDI…WARHGLPIVA (89 aa)) folds into the Rhodanese domain. Cys64 functions as the Cysteine persulfide intermediate in the catalytic mechanism.

In terms of assembly, monomer.

The protein localises to the cytoplasm. It functions in the pathway energy metabolism; sulfur metabolism. Functionally, sulfur carrier protein involved in sulfur trafficking for oxidative dissimilatory sulfur metabolism. Component of a sulfur relay system that starts with the sulfur-mobilizing rhodanese-like protein Rhd_2599 (Alvin_2599), which transfers the sulfur from a low-molecular-weight thiol, maybe glutathione, to the TusA protein (Alvin_2600); TusA serves as the sulfur donor for DsrEFH, which persulfurates DsrC; persulfurated DsrC very probably serves as a direct substrate for reverse-acting sulfite reductase, DsrAB. Is able to catalyze the sulfur transfer reaction from thiosulfate or glutathione (GSSH) to cyanide in vitro, however, thiosulfate is unlikely an in vivo substrate. The protein is Sulfurtransferase Alvin_2599 of Allochromatium vinosum (strain ATCC 17899 / DSM 180 / NBRC 103801 / NCIMB 10441 / D) (Chromatium vinosum).